Consider the following 348-residue polypeptide: Nicotinate-nucleotide--dimethylbenzimidazole phosphoribosyltransferase (348 aa).

Glutamate 315 (proton acceptor) is an active-site residue.

The protein belongs to the CobT family.

The enzyme catalyses 5,6-dimethylbenzimidazole + nicotinate beta-D-ribonucleotide = alpha-ribazole 5'-phosphate + nicotinate + H(+). Its pathway is nucleoside biosynthesis; alpha-ribazole biosynthesis; alpha-ribazole from 5,6-dimethylbenzimidazole: step 1/2. Its function is as follows. Catalyzes the synthesis of alpha-ribazole-5'-phosphate from nicotinate mononucleotide (NAMN) and 5,6-dimethylbenzimidazole (DMB). The polypeptide is Nicotinate-nucleotide--dimethylbenzimidazole phosphoribosyltransferase (Dechloromonas aromatica (strain RCB)).